The following is a 504-amino-acid chain: Maturase K (504 aa).

Belongs to the intron maturase 2 family. MatK subfamily.

The protein resides in the plastid. It is found in the chloroplast. In terms of biological role, usually encoded in the trnK tRNA gene intron. Probably assists in splicing its own and other chloroplast group II introns. In Adansonia digitata (Baobab tree), this protein is Maturase K.